The primary structure comprises 421 residues: Anhydromevalonate phosphate decarboxylase (421 aa).

Mn(2+) contacts are provided by Asn-131 and Glu-194. The active-site Proton acceptor is Asp-240.

Belongs to the UbiD family. Requires prenylated FMN as cofactor. The cofactor is Mn(2+).

It catalyses the reaction (2E)-3-methyl-5-phosphooxypent-2-enoate + H(+) = isopentenyl phosphate + CO2. Its pathway is isoprenoid biosynthesis; isopentenyl diphosphate biosynthesis via mevalonate pathway. Functionally, catalyzes the conversion of trans-anhydromevalonate 5-phosphate (tAHMP) into isopentenyl phosphate. Involved in the archaeal mevalonate (MVA) pathway, which provides fundamental precursors for isoprenoid biosynthesis, such as isopentenyl diphosphate (IPP) and dimethylallyl diphosphate (DMAPP). The chain is Anhydromevalonate phosphate decarboxylase from Methanocaldococcus jannaschii (strain ATCC 43067 / DSM 2661 / JAL-1 / JCM 10045 / NBRC 100440) (Methanococcus jannaschii).